Reading from the N-terminus, the 125-residue chain is Cu-Zn superoxide dismutase-like protein (125 aa).

Cysteines 52 and 102 form a disulfide.

The protein belongs to the Cu-Zn superoxide dismutase family.

Its subcellular location is the host cytoplasm. Functionally, virion protein with no enzymatic activity. The chain is Cu-Zn superoxide dismutase-like protein from Mus musculus (Mouse).